Consider the following 260-residue polypeptide: Methylphosphonate hydroxylase (260 aa).

K107 provides a ligand contact to 2-oxoglutarate. Fe cation contacts are provided by H117, D119, and H195.

Belongs to the PhyH family. Fe(2+) serves as cofactor.

The enzyme catalyses methylphosphonate + 2-oxoglutarate + O2 = hydroxymethylphosphonate + succinate + CO2. Functionally, part of an oxidative pathway for utilization of methylphosphonic acid as a phosphate source. Catalyzes the conversion of methylphosphonic acid to hydroxymethylphosphonic acid. Is specific for the hydroxylation of methylphosphonate. The sequence is that of Methylphosphonate hydroxylase from Gimesia maris (strain ATCC 29201 / DSM 8797 / 534-30) (Planctomyces maris).